We begin with the raw amino-acid sequence, 225 residues long: MSLPEPLLRADWPRERLLRHGAATLSDPELLALALRTGVAGCNAVQLGHDLLRRFGGLRGLLGTSPAELQVVPGLGTAKACVLAAVLELARRTLEEDLVRQDALANPDLVRRYCQAALGHRKVEHCIALYLDARLKLIICAEVARGTLTQAQIYPREIVREALRHHAAALILAHNHPGGTAAASAADIAMTRQIRQALALIDVRLIDHVIVAGAATVSMAAQGHL.

The MPN domain occupies 103–225 (ALANPDLVRR…TVSMAAQGHL (123 aa)). Zn(2+)-binding residues include His-174, His-176, and Asp-187. Positions 174–187 (HNHPGGTAAASAAD) match the JAMM motif motif.

This sequence belongs to the UPF0758 family.

The protein is UPF0758 protein BB3258 of Bordetella bronchiseptica (strain ATCC BAA-588 / NCTC 13252 / RB50) (Alcaligenes bronchisepticus).